Here is a 466-residue protein sequence, read N- to C-terminus: UPF0652 protein C16A11.03c (466 aa).

The protein belongs to the UPF0652 family.

It localises to the cytoplasm. Its subcellular location is the nucleus. The polypeptide is UPF0652 protein C16A11.03c (Schizosaccharomyces pombe (strain 972 / ATCC 24843) (Fission yeast)).